Reading from the N-terminus, the 71-residue chain is Putative antitoxin VapB14 (71 aa).

In terms of biological role, putative antitoxin component of a possible type II toxin-antitoxin (TA) system. The cognate toxin is VapB14. The sequence is that of Putative antitoxin VapB14 (vapB14) from Mycobacterium tuberculosis (strain ATCC 25618 / H37Rv).